A 647-amino-acid chain; its full sequence is 1-phosphatidylinositol 4,5-bisphosphate phosphodiesterase zeta-1 (647 aa).

Residues 43–78 enclose the EF-hand domain; it reads CHFAHVKHIFKENDRQNQGRITIEEFRAIYRCIVHR. One can recognise a PI-PLC X-box domain in the interval 163 to 307; sequence QDMNHPLSDY…LKFKILVKNR (145 aa). Residues His-178 and His-223 contribute to the active site. A PI-PLC Y-box domain is found at 386-502; the sequence is LSDLVIYTKA…GYILKPDILR (117 aa). Residues 502 to 627 form the C2 domain; it reads RDTTLGFNPN…KGYRRVPLFS (126 aa).

In terms of assembly, interacts via its C2 domain with PtdIns(3)P and, to a lesser extent, PtdIns(5)P in vitro. Ca(2+) is required as a cofactor. Highly expressed in postpuberal testis, where expression is sperm cell-specific. Also expressed in brain of both sexes.

It localises to the nucleus. The protein resides in the cytoplasm. It is found in the perinuclear region. It carries out the reaction a 1,2-diacyl-sn-glycero-3-phospho-(1D-myo-inositol-4,5-bisphosphate) + H2O = 1D-myo-inositol 1,4,5-trisphosphate + a 1,2-diacyl-sn-glycerol + H(+). Its function is as follows. The production of the second messenger molecules diacylglycerol (DAG) and inositol 1,4,5-trisphosphate (IP3) is mediated by activated phosphatidylinositol-specific phospholipase C enzymes. In vitro, hydrolyzes PtdIns(4,5)P2 in a Ca(2+)-dependent manner. Triggers intracellular Ca(2+) oscillations in oocytes solely during M phase and is involved in inducing oocyte activation and initiating embryonic development up to the blastocyst stage. Is therefore a strong candidate for the egg-activating soluble sperm factor that is transferred from the sperm into the egg cytoplasm following gamete membrane fusion. May exert an inhibitory effect on phospholipase-C-coupled processes that depend on calcium ions and protein kinase C, including CFTR trafficking and function. This chain is 1-phosphatidylinositol 4,5-bisphosphate phosphodiesterase zeta-1, found in Mus musculus (Mouse).